We begin with the raw amino-acid sequence, 239 residues long: Proteasome subunit beta type-6 (239 aa).

Position 2 is an N-acetylalanine (Ala2). The propeptide at 2–34 is removed in mature form; it reads AATLVAARGTRPAPAWGPEAIAPDWENREVSTG. Thr35 functions as the Nucleophile in the catalytic mechanism. Residue Thr69 is modified to Phosphothreonine.

The protein belongs to the peptidase T1B family. In terms of assembly, the 26S proteasome consists of a 20S proteasome core and two 19S regulatory subunits. The 20S proteasome core is a barrel-shaped complex made of 28 subunits that are arranged in four stacked rings. The two outer rings are each formed by seven alpha subunits, and the two inner rings are formed by seven beta subunits. The proteolytic activity is exerted by three beta-subunits PSMB5, PSMB6 and PSMB7.

The protein resides in the cytoplasm. It localises to the nucleus. It carries out the reaction Cleavage of peptide bonds with very broad specificity.. Functionally, component of the 20S core proteasome complex involved in the proteolytic degradation of most intracellular proteins. This complex plays numerous essential roles within the cell by associating with different regulatory particles. Associated with two 19S regulatory particles, forms the 26S proteasome and thus participates in the ATP-dependent degradation of ubiquitinated proteins. The 26S proteasome plays a key role in the maintenance of protein homeostasis by removing misfolded or damaged proteins that could impair cellular functions, and by removing proteins whose functions are no longer required. Associated with the PA200 or PA28, the 20S proteasome mediates ubiquitin-independent protein degradation. This type of proteolysis is required in several pathways including spermatogenesis (20S-PA200 complex) or generation of a subset of MHC class I-presented antigenic peptides (20S-PA28 complex). Within the 20S core complex, PSMB6 displays a peptidylglutamyl-hydrolyzing activity also termed postacidic or caspase-like activity, meaning that the peptides bond hydrolysis occurs directly after acidic residues. This Bos taurus (Bovine) protein is Proteasome subunit beta type-6 (PSMB6).